Consider the following 208-residue polypeptide: MDKELKKEKIKLILIEPEEHLGYLLSEFFYQQNFVTYISESFIHLTDIINLHNPDIIIIDDSQNLETYKLSNIYLPIILLTTRGLKNDRMKIHKLGFDAYMLKPFDPDELIAIISNLIYKKRNIKELQFIKHRISNLNLKLKYRETSFSYINLTVKEKEVFKFIQDGLTNKQISNVMGITQRSVEKYVTKIFEKLKIQNRIQILSYFN.

The 108-residue stretch at 11 to 118 (KLILIEPEEH…ELIAIISNLI (108 aa)) folds into the Response regulatory domain. At aspartate 60 the chain carries 4-aspartylphosphate. Residues 146–208 (TSFSYINLTV…NRIQILSYFN (63 aa)) form the HTH luxR-type domain.

It is found in the plastid. It localises to the chloroplast. In Guillardia theta (Cryptophyte), this protein is Probable transcriptional regulator ycf29 (ycf29).